We begin with the raw amino-acid sequence, 574 residues long: High-affinity methionine permease (574 aa).

The Cytoplasmic segment spans residues 1 to 61 (MSEGRTFLSQ…TELDQGEKQL (61 aa)). K28 participates in a covalent cross-link: Glycyl lysine isopeptide (Lys-Gly) (interchain with G-Cter in ubiquitin). Residues 62-82 (GILSCIGLICNRMLGTGVFAV) form a helical membrane-spanning segment. At 83-92 (SSTIYTLCGS) the chain is on the extracellular side. The chain crosses the membrane as a helical span at residues 93-113 (VGLALIMWAVGAIIAISGLYV). Topologically, residues 114–140 (YMEFGTAIPKNGGEKNYLEAIFRKPKF) are cytoplasmic. The chain crosses the membrane as a helical span at residues 141–161 (FITCMYAAYIFFLGWAAGNSI). The Extracellular portion of the chain corresponds to 162–182 (NTAIMFLTAADTEVTKWNQRG). Residues 183 to 203 (IGVAVVFFAFLINSLNVKIGL) form a helical membrane-spanning segment. At 204–207 (YLQN) the chain is on the cytoplasmic side. The helical transmembrane segment at 208 to 228 (ILGIFKIGIVLFISITGWVAL) threads the bilayer. Residues 229–293 (GGGLKDGYQS…VRTLKIAGPT (65 aa)) are Extracellular-facing. The helical transmembrane segment at 294-314 (SMVFLAIIYIFVNIAYFAVVP) threads the bilayer. At 315–340 (KDKLISSKLILAADFFDIVFGGQAKR) the chain is on the cytoplasmic side. The helical transmembrane segment at 341 to 361 (AAAALVGLSALGNVLSVIFSQ) threads the bilayer. Topologically, residues 362-418 (GRIIQQLGREGVLPFSNFFASSKPFNSPMVGLFQHFIVCTVTILAPPPGDAYLLVQN) are extracellular. The helical transmembrane segment at 419 to 439 (LISYPMNIINFAISAGLLWIY) threads the bilayer. Residues 440 to 455 (WQRRQGKIEWNPPIKA) lie on the Cytoplasmic side of the membrane. A helical membrane pass occupies residues 456–476 (GVFVTGFFTLSNLYLIIAPYV). At 477-490 (PPSNGESVYSSMPY) the chain is on the extracellular side. A helical membrane pass occupies residues 491-511 (WIHCVIAWGIFFFGGVYYVVW). Residues 512 to 574 (AQLLPRWGHY…HYKSEQEKSL (63 aa)) are Cytoplasmic-facing. At T552 the chain carries Phosphothreonine. S573 carries the post-translational modification Phosphoserine.

It to yeast low affinity methionine permease (MUP3).

It localises to the membrane. High affinity permease for methionine. The chain is High-affinity methionine permease (MUP1) from Saccharomyces cerevisiae (strain ATCC 204508 / S288c) (Baker's yeast).